The chain runs to 209 residues: Uracil phosphoribosyltransferase (209 aa).

5-phospho-alpha-D-ribose 1-diphosphate is bound by residues arginine 79, arginine 104, and 131 to 139 (DPMLATGGS). Uracil-binding positions include valine 194 and 199–201 (GDA). Aspartate 200 provides a ligand contact to 5-phospho-alpha-D-ribose 1-diphosphate.

Belongs to the UPRTase family. Mg(2+) is required as a cofactor.

The enzyme catalyses UMP + diphosphate = 5-phospho-alpha-D-ribose 1-diphosphate + uracil. Its pathway is pyrimidine metabolism; UMP biosynthesis via salvage pathway; UMP from uracil: step 1/1. Its activity is regulated as follows. Allosterically activated by GTP. Its function is as follows. Catalyzes the conversion of uracil and 5-phospho-alpha-D-ribose 1-diphosphate (PRPP) to UMP and diphosphate. The polypeptide is Uracil phosphoribosyltransferase (Bacillus cereus (strain Q1)).